Reading from the N-terminus, the 435-residue chain is Citrate synthase (435 aa).

Catalysis depends on residues His311 and Asp370.

It belongs to the citrate synthase family.

It catalyses the reaction oxaloacetate + acetyl-CoA + H2O = citrate + CoA + H(+). The protein operates within carbohydrate metabolism; tricarboxylic acid cycle; isocitrate from oxaloacetate: step 1/2. The protein is Citrate synthase (gltA) of Rickettsia bellii (strain RML369-C).